The following is a 463-amino-acid chain: Quinolone resistance protein NorB (463 aa).

14 helical membrane-spanning segments follow: residues 19–39 (IVLS…VVLI), 53–73 (IAVS…GGLA), 86–106 (IILN…LLLI), 107–127 (IGRL…LSII), 142–162 (YWSI…GAVA), 165–185 (LGWR…LFLI), 201–221 (FDIK…ILIT), 230–250 (SLLF…FIVL), 273–293 (TASN…NTFV), 299–319 (YSLL…LIMI), 334–354 (PMLI…LTFL), 357–377 (ILYV…LGIY), 403–423 (MASA…YAIV), and 435–455 (IALW…LLLV).

It belongs to the major facilitator superfamily. TCR/Tet family.

The protein localises to the cell membrane. Multidrug efflux pump that acts independently of NorA and is one of the factors that confers resistance against diverse quinolones and chemical compounds. The chain is Quinolone resistance protein NorB (norB) from Staphylococcus aureus (strain bovine RF122 / ET3-1).